We begin with the raw amino-acid sequence, 768 residues long: MTTYLEFIQQNEERDGVRFSWNVWPSSRLEATRMVVPVAALFTPLKERPDLPPIQYEPVLCSRTTCRAVLNPLCQVDYRAKLWACNFCYQRNQFPPTYAGISELNQPAELLPQFSSIEYVVLRGPQMPLIFLYVVDTCMEDEDLQALKESMQMSLSLLPPTALVGLITFGRMVQVHELGCEGISKSYVFRGTKDLSAKQLQEMLGLSKVPVTQATRGPQVQQPPPSNRFLQPVQKIDMNLTDLLGELQRDPWPVPQGKRPLRSSGVALSIAVGLLECTFPNTGARIMMFIGGPATQGPGMVVGDELKTPIRSWHDIEKDNAKYVKKGTKHFEALANRAATTGHVIDIYACALDQTGLLEMKCCPNLTGGYMVMGDSFNTSLFKQTFQRVFTKDMHGQFKMGFGGTLEIKTSREIKISGAIGPCVSLNSKGPCVSENEIGTGGTCQWKICGLSPTTTLAIYFEVVNQHNAPIPQGGRGAIQFVTQYQHSSGQRRIRVTTIARNWADAQTQIQNIAASFDQEAAAILMARLAIYRAETEEGPDVLRWLDRQLIRLCQKFGEYHKDDPSSFRFSETFSLYPQFMFHLRRSPFLQVFNNSPDESSYYRHHFMRQDLTQSLIMIQPILYAYSFSGPPEPVLLDSSSILADRILLMDTFFQILIYHGETIAQWRKSGYQDMPEYENFRHLLQAPVDDAQEILHSRFPMPRYIDTEHGGSQARFLLSKVNPSQTHNNMYAWGQESGAPILTDDVSLQVFMDHLKKTCCVKCCLMC.

Position 2 is an N-acetylthreonine (T2). Residues C61, C66, C85, and C88 each coordinate Zn(2+). Position 308 is a phosphothreonine (T308). Residues 632 to 718 (PEPVLLDSSS…EHGGSQARFL (87 aa)) form a Gelsolin-like repeat.

Belongs to the SEC23/SEC24 family. SEC23 subfamily. In terms of assembly, COPII is composed of at least five proteins: the Sec23/24 complex, the Sec13/31 complex and Sar1. Interacts with SEC23IP. Interacts with HTR4. Interacts with SEC16A. Interacts with SLC6A4. Interacts (as part of the Sec23/24 complex) with SEC22B; recruits SEC22B into COPII-coated vesicles and allows the transport of this cargo from the endoplasmic reticulum to the Golgi. Interacts (via Gelsolin-like repeat) with MIA2 and MIA3; specifically involved in the transport of large cargos like the collagen COL7A1. Interacts with DDHD1. Interacts with TMEM39A. Interacts with SACM1L; this interaction is reduced in the absence of TMEM39A. Interacts with kinase FAM20C; transport of FAM20C from the endoplasmic reticulum to the Golgi is likely to be mediated by COPII vesicles.

The protein resides in the cytoplasmic vesicle. It is found in the COPII-coated vesicle membrane. Its subcellular location is the endoplasmic reticulum membrane. It localises to the cytoplasm. The protein localises to the cytosol. Its function is as follows. Component of the coat protein complex II (COPII) which promotes the formation of transport vesicles from the endoplasmic reticulum (ER). The coat has two main functions, the physical deformation of the endoplasmic reticulum membrane into vesicles and the selection of cargo molecules for their transport to the Golgi complex. Required for the translocation of insulin-induced glucose transporter SLC2A4/GLUT4 to the cell membrane. This chain is Protein transport protein Sec23A, found in Bos taurus (Bovine).